The following is a 291-amino-acid chain: Early E4 34 kDa protein (291 aa).

The protein belongs to the adenoviridae E4 30 to 34 kDa protein family. In terms of assembly, interacts with E1B-55k.

The protein localises to the host nucleus. Its subcellular location is the host cytoplasm. Plays a major role to prevent cellular inhibition of viral genome replication by nuclear bodies. Assembles an SCF-like E3 ubiquitin ligase complex based on the cellular proteins ELOB, ELOC, CUL5 and RBX1, in cooperation with viral E1B-55K. This viral RING-type ligase ubiquitinates cellular substrates prior to proteasomal degradation: p53/TP53, LIG4, MRE11-RAD50-NBS1 (MRN) complex, ITGA3, DAXX and BLM. The sequence is that of Early E4 34 kDa protein from Homo sapiens (Human).